A 60-amino-acid polypeptide reads, in one-letter code: Large ribosomal subunit protein uL30 (60 aa).

It belongs to the universal ribosomal protein uL30 family. Part of the 50S ribosomal subunit.

The chain is Large ribosomal subunit protein uL30 from Kineococcus radiotolerans (strain ATCC BAA-149 / DSM 14245 / SRS30216).